The following is a 91-amino-acid chain: Probable Fe(2+)-trafficking protein (91 aa).

This sequence belongs to the Fe(2+)-trafficking protein family. Monomer.

Its function is as follows. Could be a mediator in iron transactions between iron acquisition and iron-requiring processes, such as synthesis and/or repair of Fe-S clusters in biosynthetic enzymes. The protein is Probable Fe(2+)-trafficking protein of Cronobacter sakazakii (strain ATCC BAA-894) (Enterobacter sakazakii).